We begin with the raw amino-acid sequence, 154 residues long: Large ribosomal subunit protein uL30 (154 aa).

Belongs to the universal ribosomal protein uL30 family. As to quaternary structure, part of the 50S ribosomal subunit.

The polypeptide is Large ribosomal subunit protein uL30 (Methanoregula boonei (strain DSM 21154 / JCM 14090 / 6A8)).